Reading from the N-terminus, the 248-residue chain is Uridylate kinase (248 aa).

13 to 16 (KLSG) contributes to the ATP binding site. Position 55 (glycine 55) interacts with UMP. ATP-binding residues include glycine 56 and arginine 60. UMP contacts are provided by residues aspartate 75 and 136-143 (TGNPYFTT). Threonine 163, tyrosine 169, and aspartate 172 together coordinate ATP.

The protein belongs to the UMP kinase family. As to quaternary structure, homohexamer.

It is found in the cytoplasm. It carries out the reaction UMP + ATP = UDP + ADP. Its pathway is pyrimidine metabolism; CTP biosynthesis via de novo pathway; UDP from UMP (UMPK route): step 1/1. Inhibited by UTP. In terms of biological role, catalyzes the reversible phosphorylation of UMP to UDP. The chain is Uridylate kinase from Leptospira interrogans serogroup Icterohaemorrhagiae serovar copenhageni (strain Fiocruz L1-130).